A 504-amino-acid chain; its full sequence is MTAVDTPDLLDYDEVLAKYEPVLGMEVHVELGTNTKMFCPCPTEFGAEPNTQVCPVCLGLPGSLPVVNEAAVESAIRIGLALNCSITPWGRFARKNYFYPDQPKNYQISQYDEPIATDGYLDVVLDDGTTWRVEIERAHMEEDTGKSLHVGGATGRIHGASHSLLDYNRAGVPLVEIVTKTISGAGARAPEVARAYVTALRDLLKSLNVSDVRMDQGSMRCDANASLMPIGATELGTRTETKNVNSLKSVEVAVRYEMRRQAAVLEAGGEVIQETRHFQEADGTTSPGRRKETAEDYRYFPEPDLEPVAPSAEWVEELRGTLPELPWVRRARIQADWGVSDEVMRDLVNANALDLVIATVEAGASPEAARSWWVSYLAQQANTRGVELGELPITPAQVAQVVALIDSGKLNNKVARQVVDHVLAGEGDPEQVVADHPELVVERDDTKLKAAVDEALAANPDIAEKIRGGKVAAAGKIVGDVMKATRGQADPARVKELVIEACGG.

The protein belongs to the GatB/GatE family. GatB subfamily. In terms of assembly, heterotrimer of A, B and C subunits.

The enzyme catalyses L-glutamyl-tRNA(Gln) + L-glutamine + ATP + H2O = L-glutaminyl-tRNA(Gln) + L-glutamate + ADP + phosphate + H(+). The catalysed reaction is L-aspartyl-tRNA(Asn) + L-glutamine + ATP + H2O = L-asparaginyl-tRNA(Asn) + L-glutamate + ADP + phosphate + 2 H(+). Its function is as follows. Allows the formation of correctly charged Asn-tRNA(Asn) or Gln-tRNA(Gln) through the transamidation of misacylated Asp-tRNA(Asn) or Glu-tRNA(Gln) in organisms which lack either or both of asparaginyl-tRNA or glutaminyl-tRNA synthetases. The reaction takes place in the presence of glutamine and ATP through an activated phospho-Asp-tRNA(Asn) or phospho-Glu-tRNA(Gln). This chain is Aspartyl/glutamyl-tRNA(Asn/Gln) amidotransferase subunit B, found in Rhodococcus opacus (strain B4).